The chain runs to 165 residues: Protein SprT (165 aa).

In terms of domain architecture, SprT-like spans 20–163; sequence EKLAQANLKL…RCVHCGEQLV (144 aa). Position 78 (histidine 78) interacts with Zn(2+). Glutamate 79 is a catalytic residue. Histidine 82 contacts Zn(2+).

Belongs to the SprT family. It depends on Zn(2+) as a cofactor.

Its subcellular location is the cytoplasm. The chain is Protein SprT from Shigella boydii serotype 18 (strain CDC 3083-94 / BS512).